A 265-amino-acid chain; its full sequence is Deoxycytidine kinase 1 (265 aa).

30–38 is an ATP binding site; it reads GNIAAGKST. E55, Y88, and Q99 together coordinate substrate. E129 functions as the Proton acceptor in the catalytic mechanism. Substrate is bound by residues R130 and D135. Residue 190–194 participates in ATP binding; sequence RVYTR. E199 contacts substrate. Residue 242–244 participates in ATP binding; it reads EDF.

The protein belongs to the DCK/DGK family. Homodimer.

The protein localises to the nucleus. The catalysed reaction is 2'-deoxycytidine + a ribonucleoside 5'-triphosphate = dCMP + a ribonucleoside 5'-diphosphate + H(+). The enzyme catalyses 2'-deoxyguanosine + ATP = dGMP + ADP + H(+). It carries out the reaction 2'-deoxyadenosine + ATP = dAMP + ADP + H(+). In terms of biological role, phosphorylates the deoxyribonucleosides deoxyadenosine, deoxycytidine and deoxyguanosine with highest activity against deoxycytidine followed by deadenosine and deoxyguanosine. Shows only very minor activity against deoxyuridine and deoxythymidine. The sequence is that of Deoxycytidine kinase 1 from Xenopus laevis (African clawed frog).